Here is a 301-residue protein sequence, read N- to C-terminus: UDP-N-acetylenolpyruvoylglucosamine reductase 1 (301 aa).

Positions 29 to 196 (KIGGPADILI…LEAEFQLQIG (168 aa)) constitute an FAD-binding PCMH-type domain. Arg174 is an active-site residue. The Proton donor role is filled by Ser225. Glu295 is an active-site residue.

The protein belongs to the MurB family. FAD serves as cofactor.

The protein localises to the cytoplasm. It carries out the reaction UDP-N-acetyl-alpha-D-muramate + NADP(+) = UDP-N-acetyl-3-O-(1-carboxyvinyl)-alpha-D-glucosamine + NADPH + H(+). The protein operates within cell wall biogenesis; peptidoglycan biosynthesis. Its function is as follows. Cell wall formation. This chain is UDP-N-acetylenolpyruvoylglucosamine reductase 1, found in Bacillus cereus (strain ZK / E33L).